Consider the following 343-residue polypeptide: Holliday junction branch migration complex subunit RuvB (343 aa).

Residues 1–185 (MMNENLDATG…FGISSRLQYY (185 aa)) form a large ATPase domain (RuvB-L) region. ATP contacts are provided by residues Leu24, Arg25, Gly66, Lys69, Thr70, Thr71, 132–134 (EDY), Arg175, Tyr185, and Arg222. A Mg(2+)-binding site is contributed by Thr70. Positions 186-256 (STELLSGIVE…IAKFGLKALN (71 aa)) are small ATPAse domain (RuvB-S). The tract at residues 259–343 (AHGLDEMDNK…GSNQGGLFDN (85 aa)) is head domain (RuvB-H). Residues Arg314 and Arg319 each coordinate DNA.

It belongs to the RuvB family. In terms of assembly, homohexamer. Forms an RuvA(8)-RuvB(12)-Holliday junction (HJ) complex. HJ DNA is sandwiched between 2 RuvA tetramers; dsDNA enters through RuvA and exits via RuvB. An RuvB hexamer assembles on each DNA strand where it exits the tetramer. Each RuvB hexamer is contacted by two RuvA subunits (via domain III) on 2 adjacent RuvB subunits; this complex drives branch migration. In the full resolvosome a probable DNA-RuvA(4)-RuvB(12)-RuvC(2) complex forms which resolves the HJ.

The protein localises to the cytoplasm. The enzyme catalyses ATP + H2O = ADP + phosphate + H(+). Functionally, the RuvA-RuvB-RuvC complex processes Holliday junction (HJ) DNA during genetic recombination and DNA repair, while the RuvA-RuvB complex plays an important role in the rescue of blocked DNA replication forks via replication fork reversal (RFR). RuvA specifically binds to HJ cruciform DNA, conferring on it an open structure. The RuvB hexamer acts as an ATP-dependent pump, pulling dsDNA into and through the RuvAB complex. RuvB forms 2 homohexamers on either side of HJ DNA bound by 1 or 2 RuvA tetramers; 4 subunits per hexamer contact DNA at a time. Coordinated motions by a converter formed by DNA-disengaged RuvB subunits stimulates ATP hydrolysis and nucleotide exchange. Immobilization of the converter enables RuvB to convert the ATP-contained energy into a lever motion, pulling 2 nucleotides of DNA out of the RuvA tetramer per ATP hydrolyzed, thus driving DNA branch migration. The RuvB motors rotate together with the DNA substrate, which together with the progressing nucleotide cycle form the mechanistic basis for DNA recombination by continuous HJ branch migration. Branch migration allows RuvC to scan DNA until it finds its consensus sequence, where it cleaves and resolves cruciform DNA. In Christiangramia forsetii (strain DSM 17595 / CGMCC 1.15422 / KT0803) (Gramella forsetii), this protein is Holliday junction branch migration complex subunit RuvB.